A 246-amino-acid polypeptide reads, in one-letter code: MEDLDAYRAACANRIRRLERYKKARSFCSLETDEPTSSSPSLSSNSDVSQENGSSTFDMIREKMFSLMENDMTLLKQLLQLGDQISEIKKERLRRTMSQNSLEYDEEDEKEDKFDSGFSASMSAVTNLYVDDERPQFFSRQNSVLRIPIPPRSSNRFGPRRVIRRPSDILPRQQTNNIRTLHVNSDDSDSSSSGSKTHSPSSSVYNASTLILPSKTTKNRSSNSSIDSGIRDEQLTPSPTFESVVI.

Disordered stretches follow at residues 29–54 (SLET…ENGS), 93–114 (LRRT…EDKF), and 148–246 (PIPP…SVVI). Residues 35–49 (PTSSSPSLSSNSDVS) show a composition bias toward low complexity. Polar residues predominate over residues 172–183 (RQQTNNIRTLHV). 2 stretches are compositionally biased toward low complexity: residues 190-203 (SSSS…PSSS) and 214-225 (SKTTKNRSSNSS). N-linked (GlcNAc...) asparagine glycosylation is present at Asn-219. Over residues 235–246 (LTPSPTFESVVI) the composition is skewed to polar residues.

This is an uncharacterized protein from Caenorhabditis elegans.